We begin with the raw amino-acid sequence, 96 residues long: Protein transport protein Sec61 subunit beta (96 aa).

The segment covering 1 to 17 (MPGPTPSGTNVGSSGRS) has biased composition (polar residues). Residues 1-54 (MPGPTPSGTNVGSSGRSPSKAVAARAAGSTVRQRKNASCGTRSAGRTTSAGTGG) form a disordered region. Proline 2 bears the N-acetylproline mark. The Cytoplasmic portion of the chain corresponds to 2-71 (PGPTPSGTNV…DSPGLKVGPV (70 aa)). At serine 7 the chain carries Phosphoserine. At threonine 9 the chain carries Phosphothreonine. Phosphoserine occurs at positions 13, 14, and 17. Cysteine 39 carries S-palmitoyl cysteine lipidation. A compositionally biased stretch (low complexity) spans 40 to 50 (GTRSAGRTTSA). A helical membrane pass occupies residues 72-91 (PVLVMSLLFIASVFMLHIWG). Residues 92–96 (KYTRS) lie on the Lumenal side of the membrane.

It belongs to the SEC61-beta family. The SEC61 channel-forming translocon complex consists of channel-forming core components SEC61A1, SEC61B and SEC61G and different auxiliary components such as SEC62 and SEC63. The SEC61 channel associates with the multi-pass translocon (MPT) complex. Interacts with TRAM1.

Its subcellular location is the endoplasmic reticulum membrane. Functionally, component of SEC61 channel-forming translocon complex that mediates transport of signal peptide-containing precursor polypeptides across the endoplasmic reticulum (ER). Forms a ribosome receptor and a gated pore in the ER membrane, both functions required for cotranslational translocation of nascent polypeptides. The SEC61 channel is also involved in ER membrane insertion of transmembrane proteins: it mediates membrane insertion of the first few transmembrane segments of proteins, while insertion of subsequent transmembrane regions of multi-pass membrane proteins is mediated by the multi-pass translocon (MPT) complex. The SEC61 channel cooperates with the translocating protein TRAM1 to import nascent proteins into the ER. This chain is Protein transport protein Sec61 subunit beta (SEC61B), found in Canis lupus familiaris (Dog).